A 105-amino-acid chain; its full sequence is MKNKIKIRLKSFDHRSLDQATKEIVSAVKRTFANISGPIPLPRKIQRFTVNRSPHVHIKSREQYEIRTQKRLLVIDDPNPVVVDALSKVDLAAGVDVVIELESGE.

The protein belongs to the universal ribosomal protein uS10 family. Part of the 30S ribosomal subunit.

In terms of biological role, involved in the binding of tRNA to the ribosomes. This chain is Small ribosomal subunit protein uS10, found in Rickettsia bellii (strain OSU 85-389).